We begin with the raw amino-acid sequence, 194 residues long: Ras-like protein rasS (194 aa).

10-17 (GPGGVGKS) contacts GTP. The Effector region signature appears at 32–40 (YDPTLEDSY). GTP-binding positions include 57-61 (DTAGQ) and 116-119 (NKCD). The segment at 168–194 (RQSNQHSNSQEQNTDQPIKKKKSCNLL) is disordered. Residues 169–180 (QSNQHSNSQEQN) show a composition bias toward low complexity. Position 191 is a cysteine methyl ester (C191). C191 carries S-geranylgeranyl cysteine lipidation. A propeptide spans 192-194 (NLL) (removed in mature form).

This sequence belongs to the small GTPase superfamily. Ras family.

It localises to the cell membrane. The enzyme catalyses GTP + H2O = GDP + phosphate + H(+). Its function is as follows. Ras proteins bind GDP/GTP and possess intrinsic GTPase activity. The chain is Ras-like protein rasS (rasS) from Dictyostelium discoideum (Social amoeba).